Here is a 372-residue protein sequence, read N- to C-terminus: 4-hydroxy-3-methylbut-2-en-1-yl diphosphate synthase (flavodoxin) (372 aa).

Residues Cys270, Cys273, Cys305, and Glu312 each contribute to the [4Fe-4S] cluster site.

It belongs to the IspG family. [4Fe-4S] cluster is required as a cofactor.

The catalysed reaction is (2E)-4-hydroxy-3-methylbut-2-enyl diphosphate + oxidized [flavodoxin] + H2O + 2 H(+) = 2-C-methyl-D-erythritol 2,4-cyclic diphosphate + reduced [flavodoxin]. It functions in the pathway isoprenoid biosynthesis; isopentenyl diphosphate biosynthesis via DXP pathway; isopentenyl diphosphate from 1-deoxy-D-xylulose 5-phosphate: step 5/6. Its function is as follows. Converts 2C-methyl-D-erythritol 2,4-cyclodiphosphate (ME-2,4cPP) into 1-hydroxy-2-methyl-2-(E)-butenyl 4-diphosphate. This is 4-hydroxy-3-methylbut-2-en-1-yl diphosphate synthase (flavodoxin) from Escherichia coli O139:H28 (strain E24377A / ETEC).